The primary structure comprises 933 residues: Protein translocase subunit SecA (933 aa).

Residues glutamine 87, 105–109 (GEGKT), and aspartate 515 contribute to the ATP site. 3 disordered regions span residues 567 to 588 (ESRRIDNQLRGRSGRQGDPGSS), 840 to 861 (DVEAVEEQRRQEAERMQMRHAA), and 880 to 933 (AAAE…CGKL). The span at 845–856 (EEQRRQEAERMQ) shows a compositional bias: basic and acidic residues. The span at 880-897 (AAAEGDSAPTGGAQQQSA) shows a compositional bias: low complexity. A compositionally biased stretch (basic and acidic residues) spans 905–914 (VAREGPKVGR). Positions 918, 920, 929, and 930 each coordinate Zn(2+). The segment covering 924–933 (KKYKHCCGKL) has biased composition (basic residues).

The protein belongs to the SecA family. Monomer and homodimer. Part of the essential Sec protein translocation apparatus which comprises SecA, SecYEG and auxiliary proteins SecDF-YajC and YidC. Requires Zn(2+) as cofactor.

The protein localises to the cell inner membrane. It localises to the cytoplasm. It carries out the reaction ATP + H2O + cellular proteinSide 1 = ADP + phosphate + cellular proteinSide 2.. In terms of biological role, part of the Sec protein translocase complex. Interacts with the SecYEG preprotein conducting channel. Has a central role in coupling the hydrolysis of ATP to the transfer of proteins into and across the cell membrane, serving both as a receptor for the preprotein-SecB complex and as an ATP-driven molecular motor driving the stepwise translocation of polypeptide chains across the membrane. The polypeptide is Protein translocase subunit SecA (Halorhodospira halophila (strain DSM 244 / SL1) (Ectothiorhodospira halophila (strain DSM 244 / SL1))).